Here is a 311-residue protein sequence, read N- to C-terminus: tRNA dimethylallyltransferase (311 aa).

12 to 19 (GPTASGKT) serves as a coordination point for ATP. Position 14 to 19 (14 to 19 (TASGKT)) interacts with substrate. Interaction with substrate tRNA stretches follow at residues 37 to 40 (DSAL), 161 to 165 (QRINR), and 241 to 246 (RCVGYR).

Belongs to the IPP transferase family. Monomer. The cofactor is Mg(2+).

It carries out the reaction adenosine(37) in tRNA + dimethylallyl diphosphate = N(6)-dimethylallyladenosine(37) in tRNA + diphosphate. In terms of biological role, catalyzes the transfer of a dimethylallyl group onto the adenine at position 37 in tRNAs that read codons beginning with uridine, leading to the formation of N6-(dimethylallyl)adenosine (i(6)A). The protein is tRNA dimethylallyltransferase of Histophilus somni (strain 2336) (Haemophilus somnus).